We begin with the raw amino-acid sequence, 175 residues long: ATP synthase subunit b 2 (175 aa).

A helical membrane pass occupies residues 20–40 (LIFWTTITFVLVLIILKKIAW).

Belongs to the ATPase B chain family. F-type ATPases have 2 components, F(1) - the catalytic core - and F(0) - the membrane proton channel. F(1) has five subunits: alpha(3), beta(3), gamma(1), delta(1), epsilon(1). F(0) has four main subunits: a(1), b(2) and c(10-14). The alpha and beta chains form an alternating ring which encloses part of the gamma chain. F(1) is attached to F(0) by a central stalk formed by the gamma and epsilon chains, while a peripheral stalk is formed by the delta and b chains.

The protein localises to the cell inner membrane. In terms of biological role, f(1)F(0) ATP synthase produces ATP from ADP in the presence of a proton or sodium gradient. F-type ATPases consist of two structural domains, F(1) containing the extramembraneous catalytic core and F(0) containing the membrane proton channel, linked together by a central stalk and a peripheral stalk. During catalysis, ATP synthesis in the catalytic domain of F(1) is coupled via a rotary mechanism of the central stalk subunits to proton translocation. Functionally, component of the F(0) channel, it forms part of the peripheral stalk, linking F(1) to F(0). The chain is ATP synthase subunit b 2 from Chlorobium luteolum (strain DSM 273 / BCRC 81028 / 2530) (Pelodictyon luteolum).